A 156-amino-acid polypeptide reads, in one-letter code: Putative pre-16S rRNA nuclease (156 aa).

The protein belongs to the YqgF nuclease family.

It is found in the cytoplasm. Its function is as follows. Could be a nuclease involved in processing of the 5'-end of pre-16S rRNA. The protein is Putative pre-16S rRNA nuclease of Rickettsia typhi (strain ATCC VR-144 / Wilmington).